Consider the following 500-residue polypeptide: Probable trehalose-phosphate phosphatase 8 (500 aa).

This sequence belongs to the trehalose phosphatase family. A divalent metal cation serves as cofactor.

The enzyme catalyses alpha,alpha-trehalose 6-phosphate + H2O = alpha,alpha-trehalose + phosphate. Its pathway is glycan biosynthesis; trehalose biosynthesis. In terms of biological role, removes the phosphate from trehalose 6-phosphate to produce free trehalose. Trehalose accumulation in plant may improve abiotic stress tolerance. The protein is Probable trehalose-phosphate phosphatase 8 (TPP8) of Oryza sativa subsp. japonica (Rice).